A 621-amino-acid chain; its full sequence is Putative 5'-3' exonuclease R528 (621 aa).

The protein belongs to the 5'-3' exonuclease family.

It localises to the virion. The polypeptide is Putative 5'-3' exonuclease R528 (Acanthamoeba polyphaga mimivirus (APMV)).